Reading from the N-terminus, the 161-residue chain is MTQATDSGFVQPYKGDPFVGHLSTPISDSDFTRAFIGNLPIYRPGLSPILRGLEVGMAHGYFIVGPWTKLGPLRDSAVANLGGLISTIALVLIATICLSAYGLVSFQGKSPEGADPLKTSEGWSQFTGGFFIGAMGGAVVAFFLLENFELVDSIFRGLFNS.

2 consecutive transmembrane segments (helical) span residues Leu-84–Val-104 and Phe-126–Glu-146.

The protein belongs to the PsaL family.

The protein localises to the cellular thylakoid membrane. The chain is Photosystem I reaction center subunit XI from Trichodesmium erythraeum (strain IMS101).